The following is a 340-amino-acid chain: Dihydroorotate dehydrogenase (quinone) (340 aa).

Residues 61-65 (AGLDK) and Thr-85 contribute to the FMN site. Position 65 (Lys-65) interacts with substrate. 110–114 (NRMGF) serves as a coordination point for substrate. Residues Asn-138 and Asn-171 each contribute to the FMN site. A substrate-binding site is contributed by Asn-171. Ser-174 serves as the catalytic Nucleophile. Residue Asn-176 coordinates substrate. The FMN site is built by Lys-216 and Thr-244. 245–246 (NT) serves as a coordination point for substrate. Residues Gly-267, Gly-296, and 317–318 (YS) contribute to the FMN site.

This sequence belongs to the dihydroorotate dehydrogenase family. Type 2 subfamily. Monomer. FMN is required as a cofactor.

The protein resides in the cell membrane. It catalyses the reaction (S)-dihydroorotate + a quinone = orotate + a quinol. It participates in pyrimidine metabolism; UMP biosynthesis via de novo pathway; orotate from (S)-dihydroorotate (quinone route): step 1/1. Its function is as follows. Catalyzes the conversion of dihydroorotate to orotate with quinone as electron acceptor. The protein is Dihydroorotate dehydrogenase (quinone) of Ectopseudomonas mendocina (strain ymp) (Pseudomonas mendocina).